Here is a 407-residue protein sequence, read N- to C-terminus: Tyrosine--tRNA ligase (407 aa).

Residue Tyr35 participates in L-tyrosine binding. The 'HIGH' region signature appears at 40-49 (PTADSLHVGH). L-tyrosine is bound by residues Tyr168 and Gln172. The 'KMSKS' region signature appears at 228-232 (KMGKT). Position 231 (Lys231) interacts with ATP. In terms of domain architecture, S4 RNA-binding spans 341-405 (NLLVDLLVKC…RGKKNFNRIV (65 aa)).

The protein belongs to the class-I aminoacyl-tRNA synthetase family. TyrS type 1 subfamily. Homodimer.

It is found in the cytoplasm. It carries out the reaction tRNA(Tyr) + L-tyrosine + ATP = L-tyrosyl-tRNA(Tyr) + AMP + diphosphate + H(+). Its function is as follows. Catalyzes the attachment of tyrosine to tRNA(Tyr) in a two-step reaction: tyrosine is first activated by ATP to form Tyr-AMP and then transferred to the acceptor end of tRNA(Tyr). The chain is Tyrosine--tRNA ligase from Clostridium botulinum (strain ATCC 19397 / Type A).